We begin with the raw amino-acid sequence, 874 residues long: UPF0182 protein Sfum_2137 (874 aa).

The next 7 helical transmembrane spans lie at 7–27 (WPLI…LSSL), 57–77 (IVFG…FWVA), 110–130 (SLWV…LPIF), 171–191 (RRLL…YLLE), 208–228 (LHLS…YVLQ), 252–272 (VIWA…FSMI), and 283–303 (PLVV…SAFL).

It belongs to the UPF0182 family.

It localises to the cell membrane. This chain is UPF0182 protein Sfum_2137, found in Syntrophobacter fumaroxidans (strain DSM 10017 / MPOB).